The sequence spans 268 residues: Zinc transporter ZupT (268 aa).

8 helical membrane-spanning segments follow: residues 5–25 (ILFA…GSLI), 36–56 (VLTI…MIEI), 75–95 (VVTV…DKLI), 124–144 (MGLF…LATF), 157–177 (IAVA…APIF), 187–207 (FILS…GYFL), 211–231 (FFSP…MVYI), and 248–268 (FAIG…LLFT). N136 and E139 together coordinate Fe(2+). The Zn(2+) site is built by E139 and H164. 3 residues coordinate Fe(2+): N165, E168, and E197. Position 168 (E168) interacts with Zn(2+).

Belongs to the ZIP transporter (TC 2.A.5) family. ZupT subfamily.

It localises to the cell membrane. The enzyme catalyses Zn(2+)(in) = Zn(2+)(out). Its function is as follows. Mediates zinc uptake. May also transport other divalent cations. The chain is Zinc transporter ZupT from Chlorobium chlorochromatii (strain CaD3).